A 198-amino-acid polypeptide reads, in one-letter code: Small ribosomal subunit protein uS4c (198 aa).

Residues 85-145 (LRLDATIFRL…PKKFTIILIC (61 aa)) form the S4 RNA-binding domain.

It belongs to the universal ribosomal protein uS4 family. In terms of assembly, part of the 30S ribosomal subunit.

Its subcellular location is the plastid. The protein localises to the apicoplast. Its function is as follows. One of the primary rRNA binding proteins, it binds directly to 16S rRNA where it nucleates assembly of the body of the 30S subunit. This is Small ribosomal subunit protein uS4c (rps4) from Toxoplasma gondii.